A 262-amino-acid chain; its full sequence is Short-chain Z-isoprenyl diphosphate synthase (262 aa).

Residue D40 is part of the active site. D40 contributes to the Mg(2+) binding site. Substrate contacts are provided by residues 41–44 (GNRR), W45, and 86–88 (STE). N89 functions as the Proton acceptor in the catalytic mechanism. Residues R92, R211, and 217–219 (RLS) contribute to the substrate site. E230 is a binding site for Mg(2+).

It belongs to the UPP synthase family. Z-FPP synthase subfamily. The cofactor is Mg(2+).

It catalyses the reaction isopentenyl diphosphate + (2E)-geranyl diphosphate = (2Z,6E)-farnesyl diphosphate + diphosphate. Its pathway is phospholipid metabolism; decaprenyl phosphate biosynthesis. In terms of biological role, generates Z-farnesyl diphosphate (Z-FPP) from isopentenyl pyrophosphate (IPP). Z-FPP is the precursor of decaprenyl diphosphate, which has a central role in the biosynthesis of the mycobacterial cell wall. This is Short-chain Z-isoprenyl diphosphate synthase from Mycobacterium leprae (strain TN).